A 349-amino-acid chain; its full sequence is Holliday junction branch migration complex subunit RuvB (349 aa).

The interval 1-183 (MTDPSRLVTP…FGIPIRLNFY (183 aa)) is large ATPase domain (RuvB-L). Residues Leu-22, Arg-23, Gly-64, Lys-67, Thr-68, Thr-69, 130 to 132 (EDF), Arg-173, Tyr-183, and Arg-220 contribute to the ATP site. Thr-68 serves as a coordination point for Mg(2+). Residues 184–254 (TIEELESIVT…IADHALGALE (71 aa)) are small ATPAse domain (RuvB-S). The tract at residues 257–349 (SAGLDAMDRR…GLFGDTGDQE (93 aa)) is head domain (RuvB-H). Positions 293, 312, and 317 each coordinate DNA.

The protein belongs to the RuvB family. As to quaternary structure, homohexamer. Forms an RuvA(8)-RuvB(12)-Holliday junction (HJ) complex. HJ DNA is sandwiched between 2 RuvA tetramers; dsDNA enters through RuvA and exits via RuvB. An RuvB hexamer assembles on each DNA strand where it exits the tetramer. Each RuvB hexamer is contacted by two RuvA subunits (via domain III) on 2 adjacent RuvB subunits; this complex drives branch migration. In the full resolvosome a probable DNA-RuvA(4)-RuvB(12)-RuvC(2) complex forms which resolves the HJ.

It localises to the cytoplasm. It carries out the reaction ATP + H2O = ADP + phosphate + H(+). Functionally, the RuvA-RuvB-RuvC complex processes Holliday junction (HJ) DNA during genetic recombination and DNA repair, while the RuvA-RuvB complex plays an important role in the rescue of blocked DNA replication forks via replication fork reversal (RFR). RuvA specifically binds to HJ cruciform DNA, conferring on it an open structure. The RuvB hexamer acts as an ATP-dependent pump, pulling dsDNA into and through the RuvAB complex. RuvB forms 2 homohexamers on either side of HJ DNA bound by 1 or 2 RuvA tetramers; 4 subunits per hexamer contact DNA at a time. Coordinated motions by a converter formed by DNA-disengaged RuvB subunits stimulates ATP hydrolysis and nucleotide exchange. Immobilization of the converter enables RuvB to convert the ATP-contained energy into a lever motion, pulling 2 nucleotides of DNA out of the RuvA tetramer per ATP hydrolyzed, thus driving DNA branch migration. The RuvB motors rotate together with the DNA substrate, which together with the progressing nucleotide cycle form the mechanistic basis for DNA recombination by continuous HJ branch migration. Branch migration allows RuvC to scan DNA until it finds its consensus sequence, where it cleaves and resolves cruciform DNA. The polypeptide is Holliday junction branch migration complex subunit RuvB (Rhodopseudomonas palustris (strain ATCC BAA-98 / CGA009)).